Reading from the N-terminus, the 171-residue chain is S-ribosylhomocysteine lyase (171 aa).

Residues His54, His58, and Cys128 each contribute to the Fe cation site.

The protein belongs to the LuxS family. Homodimer. The cofactor is Fe cation.

The enzyme catalyses S-(5-deoxy-D-ribos-5-yl)-L-homocysteine = (S)-4,5-dihydroxypentane-2,3-dione + L-homocysteine. Functionally, involved in the synthesis of autoinducer 2 (AI-2) which is secreted by bacteria and is used to communicate both the cell density and the metabolic potential of the environment. The regulation of gene expression in response to changes in cell density is called quorum sensing. Catalyzes the transformation of S-ribosylhomocysteine (RHC) to homocysteine (HC) and 4,5-dihydroxy-2,3-pentadione (DPD). In Shigella flexneri, this protein is S-ribosylhomocysteine lyase.